A 66-amino-acid chain; its full sequence is Beta-mammal toxin Cv2 (66 aa).

The LCN-type CS-alpha/beta domain occupies 1–66 (KEGYIVNHST…VWPLPKKTCN (66 aa)). 4 disulfide bridges follow: Cys-12-Cys-65, Cys-16-Cys-41, Cys-25-Cys-46, and Cys-29-Cys-48.

As to expression, expressed by the venom gland.

The protein resides in the secreted. Is susceptible to be slightly neutralized by human antibodies scFvs 10FG2. Beta toxins bind voltage-independently at site-4 of sodium channels (Nav) and reduces peak current and shifts the voltage of activation toward more negative potentials thereby affecting sodium channel activation and promoting spontaneous and repetitive firing. This toxin is slightly toxic to mice. The sequence is that of Beta-mammal toxin Cv2 from Centruroides villegasi (Scorpion).